Here is an 88-residue protein sequence, read N- to C-terminus: Alpha-conotoxin GVIIIB (88 aa).

The N-terminal stretch at 1–20 is a signal peptide; that stretch reads MMSKMGAMFVLLLLFTLASS. A propeptide spanning residues 21 to 43 is cleaved from the precursor; that stretch reads QQEGDVQARKTRPKSDFYRALPR. At Thr-87 the chain carries Threonine amide.

It belongs to the conotoxin S superfamily. Contains 5 disulfide bonds. Post-translationally, the predominant peptide contains 2 hydroxyprolines, while 2 minor peptides contains 1 and 3 hydroxyprolines. Expressed by the venom duct.

The protein localises to the secreted. Its function is as follows. Alpha-conotoxins act on postsynaptic membranes, they bind to the nicotinic acetylcholine receptors (nAChR) and thus inhibit them. This toxin shows high activity on alpha-9-alpha-10 (CHRNA9-CHRNA10) (IC(50)=9.79 nM). It also shows weak activity on alpha-3-beta-2 (CHRNA3-CHRNB2) (IC(50)~1 uM), alpha-6/alpha-3-beta-2-beta-3 (CHRNA6/CHRNA3-CHRNB2-CHRNB3) (IC(50)~1 uM). The toxin binds to the same or overlapping binding sites than conotoxin RgIA (AC P0C1D0). This chain is Alpha-conotoxin GVIIIB, found in Conus geographus (Geography cone).